Reading from the N-terminus, the 201-residue chain is Small ribosomal subunit protein uS4c (201 aa).

The interval 20–44 (GLTSKRPKAGSDLRNQSRSGKKSQY) is disordered. The S4 RNA-binding domain occupies 89–152 (MRLDNILFRL…NSRTLVQNLL (64 aa)).

This sequence belongs to the universal ribosomal protein uS4 family. In terms of assembly, part of the 30S ribosomal subunit. Contacts protein S5. The interaction surface between S4 and S5 is involved in control of translational fidelity.

The protein localises to the plastid. The protein resides in the chloroplast. One of the primary rRNA binding proteins, it binds directly to 16S rRNA where it nucleates assembly of the body of the 30S subunit. In terms of biological role, with S5 and S12 plays an important role in translational accuracy. This is Small ribosomal subunit protein uS4c (rps4) from Barbarea verna (Land cress).